The primary structure comprises 367 residues: Chorismate synthase (367 aa).

A disordered region spans residues 41-60 (FTHDLQRRASGKSRHTSARR). NADP(+) contacts are provided by R48 and R54. FMN-binding positions include 125 to 127 (RSS), 238 to 239 (NA), G278, 293 to 297 (KPTSS), and R319.

The protein belongs to the chorismate synthase family. As to quaternary structure, homotetramer. FMNH2 is required as a cofactor.

The catalysed reaction is 5-O-(1-carboxyvinyl)-3-phosphoshikimate = chorismate + phosphate. It participates in metabolic intermediate biosynthesis; chorismate biosynthesis; chorismate from D-erythrose 4-phosphate and phosphoenolpyruvate: step 7/7. In terms of biological role, catalyzes the anti-1,4-elimination of the C-3 phosphate and the C-6 proR hydrogen from 5-enolpyruvylshikimate-3-phosphate (EPSP) to yield chorismate, which is the branch point compound that serves as the starting substrate for the three terminal pathways of aromatic amino acid biosynthesis. This reaction introduces a second double bond into the aromatic ring system. The chain is Chorismate synthase from Xanthomonas euvesicatoria pv. vesicatoria (strain 85-10) (Xanthomonas campestris pv. vesicatoria).